The primary structure comprises 197 residues: Peptide deformylase (197 aa).

Fe cation is bound by residues Cys-106 and His-148. Glu-149 is a catalytic residue. His-152 contributes to the Fe cation binding site.

Belongs to the polypeptide deformylase family. The cofactor is Fe(2+).

The catalysed reaction is N-terminal N-formyl-L-methionyl-[peptide] + H2O = N-terminal L-methionyl-[peptide] + formate. In terms of biological role, removes the formyl group from the N-terminal Met of newly synthesized proteins. Requires at least a dipeptide for an efficient rate of reaction. N-terminal L-methionine is a prerequisite for activity but the enzyme has broad specificity at other positions. This Mycobacterium ulcerans (strain Agy99) protein is Peptide deformylase.